Here is a 182-residue protein sequence, read N- to C-terminus: RNA chaperone ProQ (182 aa).

The segment at 125-160 (EQRKEQRKDFFKKKAREERNAKTMNKAVKKGSPKKD) is disordered.

It belongs to the ProQ family.

It is found in the cytoplasm. RNA chaperone with significant RNA binding, RNA strand exchange and RNA duplexing activities. The protein is RNA chaperone ProQ of Haemophilus ducreyi (strain 35000HP / ATCC 700724).